The chain runs to 150 residues: Molybdopterin synthase catalytic subunit (150 aa).

Substrate-binding positions include 37–39, 103–104, Lys-119, and 126–128; these read KVR, HR, and KRE. Residue Lys-119 forms a Glycyl lysine isopeptide (Lys-Gly) (interchain with G-Cter in MoaD) linkage.

This sequence belongs to the MoaE family. Heterotetramer of 2 MoaD subunits and 2 MoaE subunits. Also stable as homodimer. The enzyme changes between these two forms during catalysis.

It catalyses the reaction 2 [molybdopterin-synthase sulfur-carrier protein]-C-terminal-Gly-aminoethanethioate + cyclic pyranopterin phosphate + H2O = molybdopterin + 2 [molybdopterin-synthase sulfur-carrier protein]-C-terminal Gly-Gly + 2 H(+). The protein operates within cofactor biosynthesis; molybdopterin biosynthesis. Functionally, converts molybdopterin precursor Z to molybdopterin. This requires the incorporation of two sulfur atoms into precursor Z to generate a dithiolene group. The sulfur is provided by MoaD. This Escherichia coli (strain K12) protein is Molybdopterin synthase catalytic subunit (moaE).